The chain runs to 91 residues: Small ribosomal subunit protein bS20 (91 aa).

Positions 1-18 (MPLHKSAEKRLRQSERRN) are enriched in basic and acidic residues. Positions 1–25 (MPLHKSAEKRLRQSERRNARNRARK) are disordered.

Belongs to the bacterial ribosomal protein bS20 family.

In terms of biological role, binds directly to 16S ribosomal RNA. In Chlorobium luteolum (strain DSM 273 / BCRC 81028 / 2530) (Pelodictyon luteolum), this protein is Small ribosomal subunit protein bS20.